Consider the following 326-residue polypeptide: Olfactory receptor 11H12 (326 aa).

Residues 1 to 44 (MCPLTLQVTGLMNVSEPNSSFAFVNEFILQGFTCEWTIQIFLFS) lie on the Extracellular side of the membrane. Residues N13 and N18 are each glycosylated (N-linked (GlcNAc...) asparagine). The helical transmembrane segment at 45 to 65 (LFTTTYALTITGNGAIAFVLW) threads the bilayer. Residues 66-72 (CDWRLHT) are Cytoplasmic-facing. The helical transmembrane segment at 73 to 93 (PMYMFLGNFSFLEIWYVSSTV) threads the bilayer. Over 94–112 (PKMLVNFLSEKKNISFAGC) the chain is Extracellular. A glycan (N-linked (GlcNAc...) asparagine) is linked at N106. The cysteines at positions 112 and 194 are disulfide-linked. Residues 113 to 133 (FLQFYFFFSLGTSECLLLTVM) form a helical membrane-spanning segment. Residues 134–158 (AFDQYLAICRPLLYPNIMTGHLCAK) are Cytoplasmic-facing. The chain crosses the membrane as a helical span at residues 159-179 (LVILCWVCGFLWFLIPIVLIS). Residues 180-216 (QMPFCGPNIIDHVVCDPGPRFALDCVSAPRIQLFCYT) lie on the Extracellular side of the membrane. Residues 217-237 (LSSLVIFGNFLFIIGSYTLVL) form a helical membrane-spanning segment. The Cytoplasmic portion of the chain corresponds to 238 to 259 (KAVLGMPSSTGRHKAFSTCGSH). A helical membrane pass occupies residues 260 to 280 (LAVVSLCYSSLMVMYVSPGLG). At 281–287 (HSTGMQK) the chain is on the extracellular side. The chain crosses the membrane as a helical span at residues 288–308 (IETLFYAMVTPLFNPLIYSLQ). The Cytoplasmic portion of the chain corresponds to 309 to 326 (NKEIKAALRKVLGSSNII).

It belongs to the G-protein coupled receptor 1 family.

Its subcellular location is the cell membrane. In terms of biological role, odorant receptor. The polypeptide is Olfactory receptor 11H12 (OR11H12) (Homo sapiens (Human)).